A 61-amino-acid polypeptide reads, in one-letter code: Protein translocase subunit SecE (61 aa).

A helical transmembrane segment spans residues 39–59 (LGIILIGLIGMLIRIMGILVL).

Belongs to the SecE/SEC61-gamma family. In terms of assembly, component of the Sec protein translocase complex. Heterotrimer consisting of SecY (alpha), SecG (beta) and SecE (gamma) subunits. The heterotrimers can form oligomers, although 1 heterotrimer is thought to be able to translocate proteins. Interacts with the ribosome. May interact with SecDF, and other proteins may be involved.

It is found in the cell membrane. Essential subunit of the Sec protein translocation channel SecYEG. Clamps together the 2 halves of SecY. May contact the channel plug during translocation. The protein is Protein translocase subunit SecE of Pyrococcus abyssi (strain GE5 / Orsay).